Reading from the N-terminus, the 258-residue chain is MKTPFGKAAAGQRSRTGAGHGSVSVTMIKRKAAHKKHRSRPTSQPRGNIVGCRIQHGWKDGDEPLTQWKGTVLDQVPVNPSLYLIKYDGFDCVYGLELHRDERVSSLEVLPNRVASSRISDTHLAEIMVGKAVEHIFETEEGSKNEWRGMVLAQAPVMNTWFYITYEKDPVLYMYQLLDDYKDGDLRILQDSNDSPLAEREPGEVIDSLVGKQVEYAKDDGSKRTGMVIHQVEAKPSVYFIKFDDDFHIYVYDLVKTS.

The disordered stretch occupies residues 1–23 (MKTPFGKAAAGQRSRTGAGHGSV). Tudor-like domain stretches follow at residues 50 to 99 (VGCR…LELH), 129 to 178 (VGKA…YQLL), and 210 to 255 (VGKQ…YDLV). Histone H3K4me3 and H3R8me2a binding regions lie at residues Glu138 and 246–248 (DFH).

Belongs to the SPIN/STSY family. Interacts with C11orf84/SPINDOC.

Exhibits H3K4me3-binding activity. The polypeptide is Spindlin-3 (SPIN3) (Homo sapiens (Human)).